We begin with the raw amino-acid sequence, 257 residues long: Snake venom serine protease KN10 (257 aa).

The first 18 residues, 1–18 (MVLIRVLANLLILQLSYA), serve as a signal peptide directing secretion. Positions 19–24 (QKSSEL) are excised as a propeptide. Residues 25–248 (VVGGDECNIN…HLDWIKSIIA (224 aa)) form the Peptidase S1 domain. Disulfide bonds link cysteine 31/cysteine 162, cysteine 49/cysteine 65, cysteine 141/cysteine 209, cysteine 173/cysteine 188, and cysteine 199/cysteine 224. Histidine 64 serves as the catalytic Charge relay system. A glycan (N-linked (GlcNAc...) asparagine) is linked at asparagine 102. Catalysis depends on aspartate 109, which acts as the Charge relay system. N-linked (GlcNAc...) asparagine glycosylation is found at asparagine 120 and asparagine 121. Catalysis depends on serine 203, which acts as the Charge relay system.

The protein belongs to the peptidase S1 family. Snake venom subfamily. As to quaternary structure, monomer. Expressed by the venom gland.

The protein resides in the secreted. Snake venom serine protease that may act in the hemostasis system of the prey. This chain is Snake venom serine protease KN10, found in Trimeresurus stejnegeri (Chinese green tree viper).